The chain runs to 770 residues: MEKRAAAGLEGAPGARAQLAVVCLVNIFLTGRLSSAVPALAACSGKLEQHTERRGVIYSPAWPLNYPPGTNCSWYIQGDRGDMITISFRNFDVEESHQCSLDWLLLGPAAPPRQEAFRLCGSAIPPAFISARDHVWIFFHSDASSSGQAQGFRLSYIRGKLGQASCQADEFRCDNGKCLPGPWQCNTVDECGDGSDEGNCSAPASEPPGSLCPGGTFPCSGARSTRCLPVERRCDGLQDCGDGSDEAGCPDLACGRRLGSFYGSFASPDLFGAARGPSDLHCTWLVDTQDSRRVLLQLELRLGYDDYVQVYEGLGERGDRLLQTLSYRSNHRPVSLEAAQGRLTVAYHARARSAGHGFNATYQVKGYCLPWEQPCGSSSDSDGGSLGDQGCFSEPQRCDGWWHCASGRDEQGCPACPPDQYPCEGGSGLCYTPADRCNNQKSCPDGADEKNCFSCQPGTFHCGTNLCIFETWRCDGQEDCQDGSDEHGCLAAVPRKVITAALIGSLVCGLLLVIALGCAFKLYSLRTQEYRAFETQMTRLEAEFVRREAPPSYGQLIAQGLIPPVEDFPVYSASQASVLQNLRTAMRRQMRRHASRRGPSRRRLGRLWNRLFHRPRAPRGQIPLLTAARPSQTVLGDGFLQPAPGAAPDPPAPLMDTGSTRAAGDRPPSAPGRAPEVGPSGPPLPSGLRDPECRPVDKDRKVCREPLVDGPAPADAPREPCSAQDPHPQVSTASSTLGPHSPEPLGVCRNPPPPCSPMLEASDDEALLVC.

The N-terminal stretch at 1-36 (MEKRAAAGLEGAPGARAQLAVVCLVNIFLTGRLSSA) is a signal peptide. Residues 37–496 (VPALAACSGK…HGCLAAVPRK (460 aa)) are Extracellular-facing. 9 cysteine pairs are disulfide-bonded: Cys-43-Cys-72, Cys-99-Cys-120, Cys-166-Cys-178, Cys-173-Cys-191, Cys-185-Cys-200, Cys-212-Cys-227, Cys-219-Cys-240, Cys-234-Cys-249, and Cys-254-Cys-282. A CUB 1 domain is found at 43 to 159 (CSGKLEQHTE…QGFRLSYIRG (117 aa)). Asn-71 is a glycosylation site (N-linked (GlcNAc...) asparagine). 2 LDL-receptor class A domains span residues 165–201 (SCQA…GNCS) and 211–250 (LCPG…AGCP). A glycan (N-linked (GlcNAc...) asparagine) is linked at Asn-199. In terms of domain architecture, CUB 2 spans 254–365 (CGRRLGSFYG…HGFNATYQVK (112 aa)). N-linked (GlcNAc...) asparagine glycosylation occurs at Asn-359. LDL-receptor class A domains are found at residues 415–453 (ACPP…KNCF) and 454–490 (SCQP…HGCL). 6 cysteine pairs are disulfide-bonded: Cys-416/Cys-430, Cys-423/Cys-443, Cys-437/Cys-452, Cys-455/Cys-467, Cys-462/Cys-480, and Cys-474/Cys-489. Residues 497-517 (VITAALIGSLVCGLLLVIALG) traverse the membrane as a helical segment. The Cytoplasmic segment spans residues 518–770 (CAFKLYSLRT…ASDDEALLVC (253 aa)). The tract at residues 635–770 (LGDGFLQPAP…ASDDEALLVC (136 aa)) is disordered. The span at 689-707 (RDPECRPVDKDRKVCREPL) shows a compositional bias: basic and acidic residues. Over residues 729–738 (QVSTASSTLG) the composition is skewed to polar residues. Over residues 761–770 (ASDDEALLVC) the composition is skewed to acidic residues.

This sequence belongs to the LDLR family. In terms of assembly, binds GGA1 and GGA2. Widely expressed. Highly expressed in skeletal muscle and ovary. Expressed at intermediate level in heart, brain, liver, pancreas, prostate and small intestine. Weakly expressed in testis, colon and leukocyte.

Its subcellular location is the membrane. It localises to the coated pit. Its function is as follows. Probable receptor, which may be involved in the internalization of lipophilic molecules and/or signal transduction. Its precise role is however unclear, since it does not bind to very low density lipoprotein (VLDL) or to LRPAP1 in vitro. In Homo sapiens (Human), this protein is Low-density lipoprotein receptor-related protein 3 (LRP3).